A 288-amino-acid chain; its full sequence is Putative N-terminal acetyltransferase 2 (288 aa).

The segment at 68–90 (TEEKSSQFDENKSKSNNGKKNEP) is disordered.

In terms of assembly, heterooligomeric.

Its subcellular location is the cytoplasm. Functionally, maybe involved in N-terminal acetylation of proteins. N-acetylation plays a role in normal eukaryotic translation and processing, protect against proteolytic degradation and protein turnover. The chain is Putative N-terminal acetyltransferase 2 (NAT2) from Saccharomyces cerevisiae (strain ATCC 204508 / S288c) (Baker's yeast).